A 128-amino-acid polypeptide reads, in one-letter code: uncharacterized protein (128 aa).

The 126-residue stretch at 2–127 (KLLQIRLLVN…DHNLIEIYKM (126 aa)) folds into the VOC domain. Positions 48 and 123 each coordinate Ni(2+).

The protein belongs to the glyoxalase I family.

This is an uncharacterized protein from Bacillus subtilis (strain 168).